The following is a 513-amino-acid chain: 2-isopropylmalate synthase (513 aa).

The 264-residue stretch at 5 to 268 (LIIFDTTLRD…DIGVDTTQIV (264 aa)) folds into the Pyruvate carboxyltransferase domain. Mn(2+) is bound by residues Asp14, His202, His204, and Asn239. A regulatory domain region spans residues 394–513 (RFISLSQRSE…KAVQKINPQI (120 aa)).

The protein belongs to the alpha-IPM synthase/homocitrate synthase family. LeuA type 1 subfamily. In terms of assembly, homodimer. Mn(2+) is required as a cofactor.

It localises to the cytoplasm. The enzyme catalyses 3-methyl-2-oxobutanoate + acetyl-CoA + H2O = (2S)-2-isopropylmalate + CoA + H(+). It participates in amino-acid biosynthesis; L-leucine biosynthesis; L-leucine from 3-methyl-2-oxobutanoate: step 1/4. Catalyzes the condensation of the acetyl group of acetyl-CoA with 3-methyl-2-oxobutanoate (2-ketoisovalerate) to form 3-carboxy-3-hydroxy-4-methylpentanoate (2-isopropylmalate). The protein is 2-isopropylmalate synthase of Cupriavidus necator (strain ATCC 17699 / DSM 428 / KCTC 22496 / NCIMB 10442 / H16 / Stanier 337) (Ralstonia eutropha).